The sequence spans 247 residues: Triosephosphate isomerase (247 aa).

Residues Asn-10 and Lys-12 each coordinate substrate. Residue His-94 is the Electrophile of the active site. The Proton acceptor role is filled by Glu-164.

Belongs to the triosephosphate isomerase family. As to quaternary structure, homodimer.

It is found in the cytoplasm. It carries out the reaction D-glyceraldehyde 3-phosphate = dihydroxyacetone phosphate. It catalyses the reaction dihydroxyacetone phosphate = methylglyoxal + phosphate. The protein operates within carbohydrate biosynthesis; gluconeogenesis. It participates in carbohydrate degradation; glycolysis; D-glyceraldehyde 3-phosphate from glycerone phosphate: step 1/1. Functionally, triosephosphate isomerase is an extremely efficient metabolic enzyme that catalyzes the interconversion between dihydroxyacetone phosphate (DHAP) and D-glyceraldehyde-3-phosphate (G3P) in glycolysis and gluconeogenesis. It is also responsible for the non-negligible production of methylglyoxal a reactive cytotoxic side-product that modifies and can alter proteins, DNA and lipids. The sequence is that of Triosephosphate isomerase (tpi-1) from Caenorhabditis elegans.